Here is a 317-residue protein sequence, read N- to C-terminus: Glutathione synthetase (317 aa).

An ATP-grasp domain is found at 125–311; sequence EKMFATLFPQ…IGGKLMDAID (187 aa). 152–208 contributes to the ATP binding site; that stretch reads TAKHADVILKPLDGMGGTSIFRHRAGDPNLSVILETLTALGTQQIMAQAYLPAIKDG. Residues E282 and N284 each contribute to the Mg(2+) site.

Belongs to the prokaryotic GSH synthase family. The cofactor is Mg(2+). Mn(2+) serves as cofactor.

The enzyme catalyses gamma-L-glutamyl-L-cysteine + glycine + ATP = glutathione + ADP + phosphate + H(+). The protein operates within sulfur metabolism; glutathione biosynthesis; glutathione from L-cysteine and L-glutamate: step 2/2. This chain is Glutathione synthetase, found in Pseudomonas putida (strain ATCC 47054 / DSM 6125 / CFBP 8728 / NCIMB 11950 / KT2440).